Reading from the N-terminus, the 109-residue chain is uncharacterized protein (109 aa).

Residues 82–102 (SLSFLLLLFFYFNNYYFLSMT) form a helical membrane-spanning segment.

The protein localises to the membrane. This is an uncharacterized protein from Saccharomyces cerevisiae (strain ATCC 204508 / S288c) (Baker's yeast).